Consider the following 449-residue polypeptide: Xylose isomerase (449 aa).

Catalysis depends on residues H101 and D104. Mg(2+)-binding residues include E232, E268, H271, D296, D307, D309, and D340.

The protein belongs to the xylose isomerase family. Homotetramer. Mg(2+) serves as cofactor.

It localises to the cytoplasm. The enzyme catalyses alpha-D-xylose = alpha-D-xylulofuranose. This Bifidobacterium longum (strain NCC 2705) protein is Xylose isomerase.